Here is a 66-residue protein sequence, read N- to C-terminus: uncharacterized protein (66 aa).

The protein to E.coli YfhJ.

This is an uncharacterized protein from Pseudomonas aeruginosa (strain ATCC 15692 / DSM 22644 / CIP 104116 / JCM 14847 / LMG 12228 / 1C / PRS 101 / PAO1).